Consider the following 816-residue polypeptide: Two pore channel protein 1 (816 aa).

Residues Met1–Glu112 lie on the Cytoplasmic side of the membrane. The segment at Glu17–Ala64 is disordered. Positions Pro50 to Pro63 are enriched in low complexity. Residues Leu113 to Leu133 form a helical membrane-spanning segment. Residue Arg134 is a topological domain, extracellular. The helical transmembrane segment at Leu135 to Leu155 threads the bilayer. The Cytoplasmic portion of the chain corresponds to Cys156–Thr177. Residues Ser178 to Val198 form a helical membrane-spanning segment. Residues Arg199 to Val200 are Extracellular-facing. A helical transmembrane segment spans residues Thr201–Arg220. Topologically, residues Asn221 to Asp234 are cytoplasmic. A helical transmembrane segment spans residues Ile235–Ser255. The Extracellular portion of the chain corresponds to Pro256–Tyr262. Positions Phe263–Met286 form an intramembrane region, helical; Pore-forming. At Met287–Pro294 the chain is on the extracellular side. The chain crosses the membrane as a helical span at residues Trp295–Leu315. The Cytoplasmic segment spans residues Leu316–Gln444. The chain crosses the membrane as a helical span at residues Tyr445 to Leu465. The Extracellular portion of the chain corresponds to Lys466 to Tyr479. A helical membrane pass occupies residues Leu480–Val500. Residues Glu501–Leu503 are Cytoplasmic-facing. Residues Ser504 to Ala526 form a helical membrane-spanning segment. Topologically, residues Leu527–Phe534 are extracellular. A helical transmembrane segment spans residues Ile535–Leu549. The Cytoplasmic portion of the chain corresponds to Lys550–Thr573. The chain crosses the membrane as a helical span at residues Leu574–Phe594. Residues Pro595–Asn629 lie on the Extracellular side of the membrane. N-linked (GlcNAc...) asparagine glycans are attached at residues Asn599, Asn611, and Asn616. Positions Phe630 to Met653 form an intramembrane region, helical; Pore-forming. Residues Glu654–Thr670 are Extracellular-facing. The helical transmembrane segment at Phe671–Val691 threads the bilayer. Topologically, residues Phe692–Thr816 are cytoplasmic. Residues Ser769–Ser796 adopt a coiled-coil conformation. Residues Glu782–Thr816 form a disordered region. Over residues Gln791–Thr816 the composition is skewed to low complexity.

It belongs to the calcium channel alpha-1 subunit (TC 1.A.1.11) family. Two pore calcium channel subfamily. Dimer. Interacts with MTOR; the interaction is required for TPCN1 ATP sensitivity. Interacts with STX7, STX8 and STX12. Interacts with JPT2. Found in a complex with LSM12, TPCN1 and TPCN2. In terms of processing, N-glycosylated. As to expression, highest expression found in the heart and kidney, and lowest expression found in the spleen.

The protein localises to the lysosome membrane. It is found in the endosome membrane. It localises to the early endosome membrane. Its subcellular location is the recycling endosome membrane. It catalyses the reaction Na(+)(in) = Na(+)(out). It carries out the reaction Ca(2+)(in) = Ca(2+)(out). Na(+) current is inhibited by ATP in a MTORC-dependent manner. ATP sensitivity is independent of PI(3,5)P2. Probably regulated by Mg(2+) ions, cytosolic Mg(2+) selectively inhibits outward current while lysosomal Mg(2+) modestly inhibits both the outward and inward currents. In the absence of Mg(2+), NAADP readily activates TPCN2, with properties similar to PI(3,5)P2. Both current elicited by PI(3,5)P2 as well as NAADP are inhibited by tetrandrine. Its function is as follows. Intracellular channel initially characterized as a non-selective Ca(2+)-permeable channel activated by NAADP (nicotinic acid adenine dinucleotide phosphate), it is also a voltage-gated highly-selective Na(+) channel activated directly by PI(3,5)P2 (phosphatidylinositol 3,5-bisphosphate) that senses pH changes and confers electrical excitability to organelles. Localizes to the early and recycling endosomes membranes where it plays a role in the uptake and processing of proteins and regulates organellar membrane excitability, membrane trafficking and pH homeostasis. Ion selectivity is not fixed but rather agonist-dependent and under defined ionic conditions, can be readily activated by both NAADP and PI(3,5)P2. Required for mTOR-dependent nutrient sensing. In terms of biological role, (Microbial infection) During Ebola virus (EBOV) infection, controls the movement of endosomes containing virus particles and is required by EBOV to escape from the endosomal network into the cell cytoplasm. In Homo sapiens (Human), this protein is Two pore channel protein 1.